A 1557-amino-acid chain; its full sequence is ABC transporter atnG (1557 aa).

Transmembrane regions (helical) follow at residues 27–47 (FTLY…LILA), 70–90 (LKLL…AFWM), 99–119 (LTIA…YLIH), 131–151 (IISI…RTIW), and 159–179 (VSAI…LETW). Asn-202 and Asn-249 each carry an N-linked (GlcNAc...) asparagine glycan. 6 helical membrane-spanning segments follow: residues 256 to 276 (AGAM…AGVF), 311 to 331 (ATLL…ATAT), 385 to 405 (YIHD…LLYN), 412 to 432 (IAPI…AMMA), 490 to 510 (LLIA…IVSF), and 531 to 551 (LTSL…VESI). One can recognise an ABC transmembrane type-1 1 domain in the interval 279–556 (LCQSGFIISQ…LVESISETAM (278 aa)). The ABC transporter 1 domain maps to 593-829 (AFEVDVGWKN…LDYIQGFAIA (237 aa)). 625 to 632 (GAVGCGKT) lines the ATP pocket. An N-linked (GlcNAc...) asparagine glycan is attached at Asn-667. Residues 882-902 (LVYFGLMAIFVFLQAFPTVWV) traverse the membrane as a helical segment. Positions 882–1162 (LVYFGLMAIF…LITDWTVLET (281 aa)) constitute an ABC transmembrane type-1 2 domain. N-linked (GlcNAc...) asparagine glycosylation occurs at Asn-916. 4 consecutive transmembrane segments (helical) span residues 921 to 941 (IGVY…TACF), 996 to 1016 (AVLQ…IIAV), 1020 to 1040 (YITA…TFYM), and 1105 to 1125 (LSLV…GIAV). Asn-1132 carries an N-linked (GlcNAc...) asparagine glycan. A helical membrane pass occupies residues 1135–1155 (SLGLALVNVVSLSASVKALIT). One can recognise an ABC transporter 2 domain in the interval 1199–1431 (VEYKNVSAFY…PSVFRELYKS (233 aa)). Residues Asn-1203 and Asn-1218 are each glycosylated (N-linked (GlcNAc...) asparagine). ATP is bound at residue 1233–1240 (GRSGSGKS). 2 disordered regions span residues 1439 to 1464 (ERQE…EELR) and 1503 to 1557 (RTRS…RGLH). The segment covering 1507–1522 (RSRDHSAERRESKRYS) has biased composition (basic and acidic residues).

The protein belongs to the ABC transporter superfamily. ABCC family. Conjugate transporter (TC 3.A.1.208) subfamily.

It localises to the cell membrane. Its function is as follows. ABC transporter; part of the gene cluster that mediates the biosynthesis of aspercryptins, linear lipopeptides built from six amino acids including 2 highly unusual and nonproteogenic amino acids, 2-amino-octanoic acid (2aoa) and 2-amino-dodecanol (2adol). The chain is ABC transporter atnG from Emericella nidulans (strain FGSC A4 / ATCC 38163 / CBS 112.46 / NRRL 194 / M139) (Aspergillus nidulans).